Here is a 153-residue protein sequence, read N- to C-terminus: Ribosome maturation factor RimP (153 aa).

The protein belongs to the RimP family.

The protein resides in the cytoplasm. In terms of biological role, required for maturation of 30S ribosomal subunits. In Clostridium botulinum (strain Kyoto / Type A2), this protein is Ribosome maturation factor RimP.